The chain runs to 643 residues: Extracellular metalloproteinase 4 (643 aa).

The N-terminal stretch at 1–18 (MHGLLLAGLLALPLNVLA) is a signal peptide. Residues 19 to 254 (HPTESHSSGI…VHSVVDYVSA (236 aa)) constitute a propeptide that is removed on maturation. Residues 47–57 (TKSDAVPKQDD) show a composition bias toward basic and acidic residues. Residues 47–71 (TKSDAVPKQDDESFTTSSTGDDNVS) are disordered. The segment covering 60–71 (FTTSSTGDDNVS) has biased composition (polar residues). N-linked (GlcNAc...) asparagine glycans are attached at residues asparagine 271 and asparagine 420. Histidine 437 contributes to the Zn(2+) binding site. The active site involves glutamate 438. Histidine 441 provides a ligand contact to Zn(2+). N-linked (GlcNAc...) asparagine glycosylation is present at asparagine 510.

This sequence belongs to the peptidase M36 family. The cofactor is Zn(2+).

Its subcellular location is the secreted. Functionally, secreted metalloproteinase probably acting as a virulence factor. The sequence is that of Extracellular metalloproteinase 4 (MEP4) from Trichophyton equinum (Horse ringworm fungus).